The chain runs to 178 residues: MHSSALLCCLVVLTGVRASPGQGTQSENSCTRFPGNLPHMLRDLRDAFSRVKTFFQMKDQLDNILLKESLLEDFKGYLGCQALSEMIQFYLEEVMPQAENHDPDIKEHVNSLGENLKTLRLRLRRCHRFLPCENKSKAVEQVKNAFSKLQEKGVYKAMSEFDIFINYIEAYMTMKIQN.

The first 18 residues, Met1 to Ala18, serve as a signal peptide directing secretion. 2 disulfides stabilise this stretch: Cys30/Cys126 and Cys80/Cys132. Residue Asn134 is glycosylated (N-linked (GlcNAc...) asparagine).

Belongs to the IL-10 family. Homodimer. Interacts with IL10RA and IL10RB.

The protein localises to the secreted. In terms of biological role, major immune regulatory cytokine that acts on many cells of the immune system where it has profound anti-inflammatory functions, limiting excessive tissue disruption caused by inflammation. Mechanistically, IL10 binds to its heterotetrameric receptor comprising IL10RA and IL10RB leading to JAK1 and STAT2-mediated phosphorylation of STAT3. In turn, STAT3 translocates to the nucleus where it drives expression of anti-inflammatory mediators. Targets antigen-presenting cells (APCs) such as macrophages and monocytes and inhibits their release of pro-inflammatory cytokines including granulocyte-macrophage colony-stimulating factor /GM-CSF, granulocyte colony-stimulating factor/G-CSF, IL-1 alpha, IL-1 beta, IL-6, IL-8 and TNF-alpha. Also interferes with antigen presentation by reducing the expression of MHC-class II and co-stimulatory molecules, thereby inhibiting their ability to induce T cell activation. In addition, controls the inflammatory response of macrophages by reprogramming essential metabolic pathways including mTOR signaling. The protein is Interleukin-10 (IL10) of Papio hamadryas (Hamadryas baboon).